The sequence spans 433 residues: 23S rRNA (uracil(1939)-C(5))-methyltransferase RlmD (433 aa).

One can recognise a TRAM domain in the interval Arg-10–Arg-68. Residues Cys-81, Cys-87, Cys-90, and Cys-162 each contribute to the [4Fe-4S] cluster site. Positions 265, 294, 299, 315, 342, and 363 each coordinate S-adenosyl-L-methionine. Catalysis depends on Cys-389, which acts as the Nucleophile.

This sequence belongs to the class I-like SAM-binding methyltransferase superfamily. RNA M5U methyltransferase family. RlmD subfamily.

It catalyses the reaction uridine(1939) in 23S rRNA + S-adenosyl-L-methionine = 5-methyluridine(1939) in 23S rRNA + S-adenosyl-L-homocysteine + H(+). In terms of biological role, catalyzes the formation of 5-methyl-uridine at position 1939 (m5U1939) in 23S rRNA. This is 23S rRNA (uracil(1939)-C(5))-methyltransferase RlmD from Shigella dysenteriae serotype 1 (strain Sd197).